A 128-amino-acid polypeptide reads, in one-letter code: Aspartate 1-decarboxylase (128 aa).

Serine 25 serves as the catalytic Schiff-base intermediate with substrate; via pyruvic acid. Serine 25 is modified (pyruvic acid (Ser)). Residue threonine 57 coordinates substrate. The Proton donor role is filled by tyrosine 58. Residue 73 to 75 (GSA) participates in substrate binding.

It belongs to the PanD family. Heterooctamer of four alpha and four beta subunits. Requires pyruvate as cofactor. Post-translationally, is synthesized initially as an inactive proenzyme, which is activated by self-cleavage at a specific serine bond to produce a beta-subunit with a hydroxyl group at its C-terminus and an alpha-subunit with a pyruvoyl group at its N-terminus.

It localises to the cytoplasm. The enzyme catalyses L-aspartate + H(+) = beta-alanine + CO2. Its pathway is cofactor biosynthesis; (R)-pantothenate biosynthesis; beta-alanine from L-aspartate: step 1/1. Its function is as follows. Catalyzes the pyruvoyl-dependent decarboxylation of aspartate to produce beta-alanine. The protein is Aspartate 1-decarboxylase of Burkholderia cenocepacia (strain HI2424).